A 202-amino-acid chain; its full sequence is Transcription factor IBH1 (202 aa).

The segment covering 1-16 (MDAKRTPPPPTPPNPN) has biased composition (pro residues). The segment at 1–33 (MDAKRTPPPPTPPNPNPSVIGSGAAADGGGFGR) is disordered. In terms of domain architecture, bHLH spans 136–185 (TSAAARAVPPPPRQQGEPPRAEALRRLVPGGAGMEYSSLLEETADYLRSL).

This sequence belongs to the bHLH protein family. In terms of assembly, interacts with ILI1. Binds to ILI5/BUL1 and BC1. Interacts with BCL1 and BCL2. In terms of tissue distribution, highly expressed in roots and at lower levels in leaf blades, leaf sheaths, lamina joint, stems and panicles.

Atypical and probable non DNA-binding bHLH transcription factor that acts as a negative regulator of cell elongation and plant development. Binds the transcription factor ILI1 and forms a heterodimer of antagonistic bHLH transcription factors that function downstream of BZR1 to mediate brassinosteroid regulation of cell elongation and lamina inclination. The polypeptide is Transcription factor IBH1 (Oryza sativa subsp. japonica (Rice)).